The sequence spans 201 residues: Lipopolysaccharide core heptose(II)-phosphate phosphatase (201 aa).

The first 35 residues, 1–35 (MLAFTLRFIKNKRYLATLAGALVIIAGLTSQHAWS), serve as a signal peptide directing secretion.

Belongs to the phosphoglycerate mutase family. Ais subfamily.

It is found in the periplasm. The protein operates within bacterial outer membrane biogenesis; lipopolysaccharide metabolism. Functionally, catalyzes the dephosphorylation of heptose(II) of the outer membrane lipopolysaccharide core. The sequence is that of Lipopolysaccharide core heptose(II)-phosphate phosphatase from Salmonella choleraesuis (strain SC-B67).